Reading from the N-terminus, the 787-residue chain is Protein translocase subunit SecA 2 (787 aa).

Residues Gln-86, 104–108, and Asp-493 each bind ATP; that span reads GEGKT.

This sequence belongs to the SecA family. As to quaternary structure, monomer and homodimer. Part of the essential Sec protein translocation apparatus which comprises SecA, SecYEG and auxiliary proteins SecDF. Other proteins may also be involved.

Its subcellular location is the cell membrane. It is found in the cytoplasm. It catalyses the reaction ATP + H2O + cellular proteinSide 1 = ADP + phosphate + cellular proteinSide 2.. Its function is as follows. Part of the Sec protein translocase complex. Interacts with the SecYEG preprotein conducting channel. Has a central role in coupling the hydrolysis of ATP to the transfer of proteins into and across the cell membrane, serving as an ATP-driven molecular motor driving the stepwise translocation of polypeptide chains across the membrane. This is Protein translocase subunit SecA 2 from Bacillus thuringiensis subsp. konkukian (strain 97-27).